A 154-amino-acid polypeptide reads, in one-letter code: Ascorbate-specific PTS system EIIA component (154 aa).

The PTS EIIA type-2 domain occupies 6 to 150; the sequence is SLAENNSIRL…QEVLDLIDRT (145 aa). Histidine 68 serves as the catalytic Tele-phosphohistidine intermediate. A Phosphohistidine modification is found at histidine 68.

It localises to the cytoplasm. Functionally, the phosphoenolpyruvate-dependent sugar phosphotransferase system (sugar PTS), a major carbohydrate active transport system, catalyzes the phosphorylation of incoming sugar substrates concomitantly with their translocation across the cell membrane. The enzyme II UlaABC PTS system is involved in ascorbate transport. In Salmonella paratyphi A (strain ATCC 9150 / SARB42), this protein is Ascorbate-specific PTS system EIIA component (ulaC).